Consider the following 201-residue polypeptide: FMN-dependent NADH:quinone oxidoreductase (201 aa).

FMN is bound by residues Ser10, 16-18 (SQS), 96-99 (MYNF), and 140-143 (SRGG).

Belongs to the azoreductase type 1 family. In terms of assembly, homodimer. It depends on FMN as a cofactor.

It carries out the reaction 2 a quinone + NADH + H(+) = 2 a 1,4-benzosemiquinone + NAD(+). It catalyses the reaction N,N-dimethyl-1,4-phenylenediamine + anthranilate + 2 NAD(+) = 2-(4-dimethylaminophenyl)diazenylbenzoate + 2 NADH + 2 H(+). Its function is as follows. Quinone reductase that provides resistance to thiol-specific stress caused by electrophilic quinones. Functionally, also exhibits azoreductase activity. Catalyzes the reductive cleavage of the azo bond in aromatic azo compounds to the corresponding amines. The chain is FMN-dependent NADH:quinone oxidoreductase from Pectobacterium atrosepticum (strain SCRI 1043 / ATCC BAA-672) (Erwinia carotovora subsp. atroseptica).